A 560-amino-acid chain; its full sequence is Chaperonin GroEL 2 (560 aa).

ATP-binding positions include 29–32, 86–90, glycine 413, and aspartate 492; these read TIGP and DGTTT. The disordered stretch occupies residues 520-542; it reads DKPEPPSAPGAEGGDPMGGMGGM. Positions 530–542 are enriched in gly residues; that stretch reads AEGGDPMGGMGGM.

This sequence belongs to the chaperonin (HSP60) family. In terms of assembly, forms a cylinder of 14 subunits composed of two heptameric rings stacked back-to-back. Interacts with the co-chaperonin GroES.

The protein resides in the cytoplasm. The enzyme catalyses ATP + H2O + a folded polypeptide = ADP + phosphate + an unfolded polypeptide.. In terms of biological role, together with its co-chaperonin GroES, plays an essential role in assisting protein folding. The GroEL-GroES system forms a nano-cage that allows encapsulation of the non-native substrate proteins and provides a physical environment optimized to promote and accelerate protein folding. The protein is Chaperonin GroEL 2 of Prochlorococcus marinus (strain NATL2A).